The primary structure comprises 468 residues: Cyclin-T1.1 (468 aa).

Over residues 336 to 354 (KERGVEEERRKRERDRMAG) the composition is skewed to basic and acidic residues. Positions 336–468 (KERGVEEERR…DMDLEDGELE (133 aa)) are disordered. A compositionally biased stretch (pro residues) spans 387-402 (APPPIPPQLNFPPPPI). The segment covering 458-468 (SDMDLEDGELE) has biased composition (acidic residues).

It belongs to the cyclin family. Cyclin C subfamily.

Its function is as follows. Regulatory subunit of the cyclin-dependent kinase pair (CDK9/cyclin T) complex, also called positive transcription elongation factor B (P-TEFb), which is proposed to facilitate the transition from abortive to production elongation by phosphorylating the CTD (carboxy-terminal domain) of the large subunit of RNA polymerase II (RNAP II). This is Cyclin-T1.1 from Caenorhabditis elegans.